The chain runs to 89 residues: UPF0237 protein lin0537 (89 aa).

One can recognise an ACT domain in the interval 4–78 (VLTVIGKDNV…EELQVKIHIQ (75 aa)).

The protein belongs to the UPF0237 family.

The chain is UPF0237 protein lin0537 from Listeria innocua serovar 6a (strain ATCC BAA-680 / CLIP 11262).